The sequence spans 253 residues: 5'-nucleotidase SurE (253 aa).

A divalent metal cation is bound by residues D8, D9, S39, and N95.

The protein belongs to the SurE nucleotidase family. The cofactor is a divalent metal cation.

It localises to the cytoplasm. The enzyme catalyses a ribonucleoside 5'-phosphate + H2O = a ribonucleoside + phosphate. Its function is as follows. Nucleotidase that shows phosphatase activity on nucleoside 5'-monophosphates. This Clostridium beijerinckii (strain ATCC 51743 / NCIMB 8052) (Clostridium acetobutylicum) protein is 5'-nucleotidase SurE.